A 74-amino-acid polypeptide reads, in one-letter code: U-scoloptoxin(09)-Sm3a (74 aa).

The signal sequence occupies residues 1 to 22 (MNANSIFLCFFIMLIGCTLTHS).

This sequence belongs to the scoloptoxin-09 family. Post-translationally, contains 3 disulfide bonds. As to expression, expressed by the venom gland.

It localises to the secreted. The polypeptide is U-scoloptoxin(09)-Sm3a (Scolopendra morsitans (Tanzanian blue ringleg centipede)).